A 683-amino-acid chain; its full sequence is DNA ligase (683 aa).

NAD(+)-binding positions include 44-48, 93-94, and E127; these read DAEYD and SL. K129 functions as the N6-AMP-lysine intermediate in the catalytic mechanism. NAD(+) contacts are provided by R150, E187, K302, and K326. Positions 420, 423, 438, and 444 each coordinate Zn(2+). Residues 601–683 form the BRCT domain; that stretch reads RVGGRLAGLT…SKLLATGGNQ (83 aa).

This sequence belongs to the NAD-dependent DNA ligase family. LigA subfamily. Mg(2+) serves as cofactor. Requires Mn(2+) as cofactor.

It carries out the reaction NAD(+) + (deoxyribonucleotide)n-3'-hydroxyl + 5'-phospho-(deoxyribonucleotide)m = (deoxyribonucleotide)n+m + AMP + beta-nicotinamide D-nucleotide.. DNA ligase that catalyzes the formation of phosphodiester linkages between 5'-phosphoryl and 3'-hydroxyl groups in double-stranded DNA using NAD as a coenzyme and as the energy source for the reaction. It is essential for DNA replication and repair of damaged DNA. This chain is DNA ligase, found in Trichlorobacter lovleyi (strain ATCC BAA-1151 / DSM 17278 / SZ) (Geobacter lovleyi).